A 156-amino-acid polypeptide reads, in one-letter code: Transmembrane protein 50 homolog (156 aa).

Transmembrane regions (helical) follow at residues 5 to 25 (IMKY…FLWI), 45 to 65 (IQWI…MANI), 87 to 107 (VWLF…LWIM), and 124 to 144 (PGIA…LLVF).

The protein belongs to the UPF0220 family.

It localises to the membrane. This chain is Transmembrane protein 50 homolog (tmem50), found in Dictyostelium discoideum (Social amoeba).